We begin with the raw amino-acid sequence, 619 residues long: ESX-2 secretion system protein EccA2 (619 aa).

373-380 (GPPGTGKT) lines the ATP pocket.

The protein belongs to the CbxX/CfxQ family. In terms of assembly, part of the ESX-2 / type VII secretion system (T7SS), which is composed of cytosolic and membrane components.

It localises to the cytoplasm. Part of an ESX-2 / type VII specialized secretion system (T7SS), which exports several proteins. May have ATPase activity and might provide energy for the export of ESX-2 substrates. This Mycobacterium bovis (strain ATCC BAA-935 / AF2122/97) protein is ESX-2 secretion system protein EccA2.